Here is a 352-residue protein sequence, read N- to C-terminus: MDSESQLLEGAVEKIGLIPRSIIRTINRFQQQLFPDAVEYFIQEFRVSRSQVLVSLQCLLTLIIIPLFIHFFAKTVFLTPCIEYVWNTYKTDIFLNSYQQEQALTEMRNFEEILYFDLLVQSNEEPVTQEGLPFTFLQHSQGSVDEEKTTAPITAYAVSNMGNPETATIAPQHLHGSVGGKLESEFRFTNPSFVGKNNVTGATTITAAIPLQKKLVDLAQSANKQSIAALTNLFADLLTLFSLIILFIRLKSQIIILKSFLIETFYSLNDTTKSFMLIFSTDLLVGFHSPRGWEIFLDFILSRFGLPHDENIILLFVATFPVLLDSVIKYWIFRYLNKISPSTVATYHAMIE.

3 consecutive transmembrane segments (helical) span residues 52 to 72 (VLVS…IHFF), 227 to 247 (IAAL…IILF), and 312 to 332 (IILL…KYWI).

Belongs to the CemA family.

The protein localises to the plastid. Its subcellular location is the chloroplast inner membrane. The catalysed reaction is K(+)(in) + H(+)(out) = K(+)(out) + H(+)(in). In terms of biological role, contributes to K(+)/H(+) antiport activity by supporting proton efflux to control proton extrusion and homeostasis in chloroplasts in a light-dependent manner to modulate photosynthesis. Prevents excessive induction of non-photochemical quenching (NPQ) under continuous-light conditions. Indirectly promotes efficient inorganic carbon uptake into chloroplasts. This Oltmannsiellopsis viridis (Marine flagellate) protein is Potassium/proton antiporter CemA.